A 1002-amino-acid chain; its full sequence is Mitogen-activated protein kinase kinase kinase 21 (1002 aa).

The tract at residues 1-26 (MALPVAEGTADTPLSPARDDSGSTSS) is disordered. The SH3 domain occupies 24–88 (TSSGMWAALY…PASYVAPCGP (65 aa)). A Protein kinase domain is found at 110 to 390 (LELKELIGAG…QLTAIEEAVL (281 aa)). ATP contacts are provided by residues 116 to 124 (IGAGGFGQV) and K137. The Proton acceptor role is filled by D247. Position 283 is a phosphothreonine; by autocatalysis (T283). A Phosphoserine; by autocatalysis and MAP4K1 modification is found at S287. Leucine-zipper regions lie at residues 409–430 (IQQM…EEEL) and 444–466 (LRRR…LNVL). 6 disordered regions span residues 508–531 (TVQA…PPGS), 574–604 (GCTW…NSPW), 640–689 (HRKP…VGAP), 721–778 (AQAP…SHSS), 797–823 (LGNA…SGCE), and 878–899 (QSAP…RDLA). Phosphoserine occurs at positions 512, 527, and 531. The residue at position 576 (T576) is a Phosphothreonine. Over residues 584-596 (TKERPEGRERVRP) the composition is skewed to basic and acidic residues. Position 598 is a phosphoserine (S598). Over residues 661-677 (DSQREDSSEAESREEGS) the composition is skewed to basic and acidic residues. 2 stretches are compositionally biased toward low complexity: residues 740-758 (QPAS…QPSA) and 766-778 (STLL…SHSS).

This sequence belongs to the protein kinase superfamily. STE Ser/Thr protein kinase family. MAP kinase kinase kinase subfamily. As to quaternary structure, homodimer. Interacts with TLR4. Mg(2+) is required as a cofactor. Autophosphorylation on serine and threonine residues within the activation loop plays a role in enzyme activation.

It catalyses the reaction L-seryl-[protein] + ATP = O-phospho-L-seryl-[protein] + ADP + H(+). The catalysed reaction is L-threonyl-[protein] + ATP = O-phospho-L-threonyl-[protein] + ADP + H(+). With respect to regulation, homodimerization via the leucine zipper domains is required for autophosphorylation and subsequent activation. Functionally, negative regulator of TLR4 signaling. Does not activate JNK1/MAPK8 pathway, p38/MAPK14, nor ERK2/MAPK1 pathways. This is Mitogen-activated protein kinase kinase kinase 21 (Map3k21) from Mus musculus (Mouse).